The sequence spans 2069 residues: Dedicator of cytokinesis protein 9 (2069 aa).

Residues serine 21, serine 32, serine 167, and serine 170 each carry the phosphoserine modification. In terms of domain architecture, PH spans 174–281 (GITKHGWLYK…WITILNKILQ (108 aa)). The interval 290-313 (EKRNGDSHEDDEQSKLEGSGSGLD) is disordered. Phosphoserine occurs at positions 433 and 443. The C2 DOCK-type domain maps to 640–818 (TNHLYVYPKY…PLLKISTHLV (179 aa)). 2 positions are modified to phosphoserine: serine 927 and serine 1235. Threonine 1241 bears the Phosphothreonine mark. Positions 1241 to 1282 (TPNINSVRNADSRGSLISTDSGNSLPERNSEKSNSLDKHQQS) are disordered. A phosphoserine mark is found at serine 1255, serine 1261, and serine 1264. Polar residues predominate over residues 1255–1267 (SLISTDSGNSLPE). The segment covering 1268-1280 (RNSEKSNSLDKHQ) has biased composition (basic and acidic residues). Residues 1605–2069 (KSYASTPELR…LSEIMHEQLG (465 aa)) enclose the DOCKER domain. Residues 1693 to 2069 (DEEASMMEDV…LSEIMHEQLG (377 aa)) form an interaction with CDC42 region. Coiled-coil stretches lie at residues 1948 to 1982 (IEVA…KLQG) and 2034 to 2067 (NERL…MHEQ).

This sequence belongs to the DOCK family. Homodimer. Interacts preferentially with nucleotide-depleted CDC42. Widely expressed, with highest expression in heart and placenta. Expressed at intermediate level in kidney, brain, lung and skeletal muscle.

It is found in the endomembrane system. Guanine nucleotide-exchange factor (GEF) that activates CDC42 by exchanging bound GDP for free GTP. Overexpression induces filopodia formation. This chain is Dedicator of cytokinesis protein 9, found in Homo sapiens (Human).